Reading from the N-terminus, the 391-residue chain is Arsenite methyltransferase (391 aa).

The segment at 1–126 (MELWTHPTPA…TMVADRDPEE (126 aa)) is disordered. Residues 28 to 39 (CSQPWATTPGTN) are compositionally biased toward polar residues. A compositionally biased stretch (low complexity) spans 40–65 (SSDASRTPTTASASATSKPQSASARA). Residues 102 to 116 (KRSTTCEATMSNDNE) show a composition bias toward polar residues.

This sequence belongs to the methyltransferase superfamily. Arsenite methyltransferase family.

The catalysed reaction is arsenic triglutathione + [thioredoxin]-dithiol + S-adenosyl-L-methionine + 2 H2O = methylarsonous acid + [thioredoxin]-disulfide + 3 glutathione + S-adenosyl-L-homocysteine + H(+). The enzyme catalyses arsenic triglutathione + 2 [thioredoxin]-dithiol + 2 S-adenosyl-L-methionine + H2O = dimethylarsinous acid + 2 [thioredoxin]-disulfide + 3 glutathione + 2 S-adenosyl-L-homocysteine + 2 H(+). It catalyses the reaction arsenic triglutathione + 3 [thioredoxin]-dithiol + 3 S-adenosyl-L-methionine = trimethylarsine + 3 [thioredoxin]-disulfide + 3 glutathione + 3 S-adenosyl-L-homocysteine + 3 H(+). Its function is as follows. Catalyzes the transfer of a methyl group from AdoMet to arsenite, producing methylated arsenicals. This chain is Arsenite methyltransferase, found in Halobacterium salinarum (strain ATCC 700922 / JCM 11081 / NRC-1) (Halobacterium halobium).